The primary structure comprises 861 residues: Putative glutamate--cysteine ligase 2-2 (861 aa).

The interval 1 to 372 (MSDARIVAVG…RDVPPAGAAA (372 aa)) is carboxylate-amine ligase. Residues 373–861 (ALGSAPAVSA…GSKDTWIPRR (489 aa)) form a unknown region.

It in the N-terminal section; belongs to the glutamate--cysteine ligase type 2 family. YbdK subfamily.

The enzyme catalyses L-cysteine + L-glutamate + ATP = gamma-L-glutamyl-L-cysteine + ADP + phosphate + H(+). Its function is as follows. ATP-dependent carboxylate-amine ligase which exhibits weak glutamate--cysteine ligase activity. This Frankia casuarinae (strain DSM 45818 / CECT 9043 / HFP020203 / CcI3) protein is Putative glutamate--cysteine ligase 2-2.